A 371-amino-acid chain; its full sequence is tRNA (guanine(26)-N(2))-dimethyltransferase (371 aa).

The Trm1 methyltransferase domain occupies Ile4–Leu368. Residues Arg41, Arg66, Asp82, Asp108, and Ala109 each contribute to the S-adenosyl-L-methionine site. Zn(2+) contacts are provided by Cys237, Cys240, Cys256, and Cys259.

Belongs to the class I-like SAM-binding methyltransferase superfamily. Trm1 family.

It catalyses the reaction guanosine(26) in tRNA + 2 S-adenosyl-L-methionine = N(2)-dimethylguanosine(26) in tRNA + 2 S-adenosyl-L-homocysteine + 2 H(+). Its function is as follows. Dimethylates a single guanine residue at position 26 of a number of tRNAs using S-adenosyl-L-methionine as donor of the methyl groups. This chain is tRNA (guanine(26)-N(2))-dimethyltransferase, found in Methanosphaerula palustris (strain ATCC BAA-1556 / DSM 19958 / E1-9c).